The sequence spans 417 residues: Hydrogen cyanide synthase subunit HcnC (417 aa).

Positions M1–S18 are cleaved as a signal peptide. I7 to Y21 contributes to the FAD binding site. The N-palmitoyl cysteine moiety is linked to residue C19. The S-diacylglycerol cysteine moiety is linked to residue C19. The chain crosses the membrane as a helical span at residues S46–F66.

This sequence belongs to the FAD-dependent glycerol-3-phosphate dehydrogenase family. Heterotrimer of HcnA, HcnB and HcnC. The cofactor is FAD.

It localises to the cell membrane. It catalyses the reaction glycine + 2 A = hydrogen cyanide + 2 AH2 + CO2. Its activity is regulated as follows. Oxygen is necessary for cyanogenesis. Activated by succinate, glycine methyl ester, glucose and D,L-methionine in addition to glycine. Phenazine methosulfate, methylene blue, 2,6-dichlorophenolindophenol (DCIP) and ferricyanide can replace oxygen for the reaction. Inhibited by pyrrolnitrin and acriflavine at 1 mM concentration. Functionally, a three-component membrane-bound flavoenzyme that catalyzes the formation of hydrogen cyanide, a secondary metabolite, by transfer of electrons to a cyanide-resistant branch of the aerobic respiratory chain. The sequence is that of Hydrogen cyanide synthase subunit HcnC from Pseudomonas aeruginosa (strain ATCC 15692 / DSM 22644 / CIP 104116 / JCM 14847 / LMG 12228 / 1C / PRS 101 / PAO1).